A 255-amino-acid polypeptide reads, in one-letter code: MSLVDVDGLSLRYGARTVLSRVSLSIAPGEIVTIVGPNGSGKTSLLRAIIGAVKPFQGRVTRGAGVTLGYVPQKLHIDETLPMTVARFLRLPGGASEAEIDQALAQAGVRDLSGSQLAQLSGGQFQRVMLARALIGKPDLLLLDEATQGLDQRGSASFYQQIEQVRRDTGCAVLMISHELHVVMSASDRVICLNGHVCCEGTPAVVASAPEYRALFGTGTGGALALYRHEHDHEHDHHDGCAHGQATEDRTEAAE.

One can recognise an ABC transporter domain in the interval V4–G219. Residue G36–T43 coordinates ATP. The interval E234–E255 is disordered.

This sequence belongs to the ABC transporter superfamily. Zinc importer (TC 3.A.1.15.5) family. The complex is composed of two ATP-binding proteins (ZnuC), two transmembrane proteins (ZnuB) and a solute-binding protein (ZnuA).

It localises to the cell inner membrane. The catalysed reaction is Zn(2+)(out) + ATP(in) + H2O(in) = Zn(2+)(in) + ADP(in) + phosphate(in) + H(+)(in). In terms of biological role, part of the ABC transporter complex ZnuABC involved in zinc import. Responsible for energy coupling to the transport system. The polypeptide is Zinc import ATP-binding protein ZnuC (Roseobacter denitrificans (strain ATCC 33942 / OCh 114) (Erythrobacter sp. (strain OCh 114))).